The following is an 837-amino-acid chain: MKKLIVQFTTITLLMSTSFLVGAQRYSFDPNLLVDGNNNTDTSLFEQGNELPGTYLVDIILNGNKVDSTNVTFHSEKSPSGEPFLQSCLTKEQLSRYGVDVDAYPELSPALKNSQTNPCVNLAAIPQASEEFQFYNMQLVLSIPQAALRPEGEVPIERWDDGITAFLLNYMANISETQFRQNGGYRRSQYIQLYPGLNLGAWRVRNATNWSQSGDRGGKWQSAYTYATRGIYRLKSRVTLGESYTPGDFFDSIPFRGVMLGDDPNMQPSNQRDFIPVVRGIARSQAQVEIRQNGYLIYSTVVPPGPFELSDVIPSKSGSDLHVRVLESNGASQAFIVPYEVPAIALRKGHLRYNLVAGQYRPANADVETPPVAQATVAYGLPWNLTAFIGEQWSRHYQATSAGLGGLLGEYGALSSSITQATSQYHHQQPVKGQAWEVRYNKTLQASDTSFSLVNSQYSTNGFSTLSDVLQSYRQSGSGDNRDKIDENSRSRDLRNQISAVIGQSLGKFGYLNLNWSRQVYRGPIPAKNSLGIHYNLNVGNSFWALSWVQNANENKNDRILSLSVSIPLGGHHDTYASYRMTSSNGSNDHEIGMYGQAFDSRLSWSVRQAEHYGQPNSGHNSGSLRLGWQGSYGNIAGNYYYTPSIRQLSADVSGGAIIHRHGLTLGPQINGTSVLVEVPGVGGVTTTEDRRLKTDFRGYSIVSGLSPYQEHDIVLETADLPPDAEVAKTDTKVLPTEGAIVRASFSPQIGAKALMTITRANGQTIPFGAMASLVNQSANAAIVDEGGKAYLTGLPETGQLLVQWGKDAGQQCRVDYQLSPAEKGDTGLYMLSGVCH.

Positions M1 to A23 are cleaved as a signal peptide.

The protein belongs to the fimbrial export usher family.

Its subcellular location is the cell outer membrane. Involved in the export and assembly of PsaA (pH 6) fimbrial subunits across the outer membrane. This Yersinia pestis protein is Outer membrane usher protein PsaC (psaC).